A 529-amino-acid chain; its full sequence is Peptide chain release factor 3 (529 aa).

A tr-type G domain is found at 11–280 (SKRRTFAIIS…GLVAWAPAPM (270 aa)). Residues 20–27 (SHPDAGKT), 88–92 (DTPGH), and 142–145 (NKLD) each bind GTP.

Belongs to the TRAFAC class translation factor GTPase superfamily. Classic translation factor GTPase family. PrfC subfamily.

It is found in the cytoplasm. In terms of biological role, increases the formation of ribosomal termination complexes and stimulates activities of RF-1 and RF-2. It binds guanine nucleotides and has strong preference for UGA stop codons. It may interact directly with the ribosome. The stimulation of RF-1 and RF-2 is significantly reduced by GTP and GDP, but not by GMP. The chain is Peptide chain release factor 3 from Pectobacterium carotovorum subsp. carotovorum (strain PC1).